The chain runs to 309 residues: Tagatose-6-phosphate kinase (309 aa).

It belongs to the carbohydrate kinase PfkB family. LacC subfamily.

The enzyme catalyses D-tagatofuranose 6-phosphate + ATP = D-tagatofuranose 1,6-bisphosphate + ADP + H(+). The protein operates within carbohydrate metabolism; D-tagatose 6-phosphate degradation; D-glyceraldehyde 3-phosphate and glycerone phosphate from D-tagatose 6-phosphate: step 1/2. In Streptococcus pyogenes serotype M28 (strain MGAS6180), this protein is Tagatose-6-phosphate kinase.